Reading from the N-terminus, the 95-residue chain is Defensin-1 (95 aa).

The N-terminal stretch at 1–19 (MKIYFIVGLLFMAMVAIMA) is a signal peptide. Positions 20–43 (APVEDEFEPLEHFENEERADRHRR) are excised as a propeptide. Intrachain disulfides connect cysteine 46–cysteine 74, cysteine 60–cysteine 79, and cysteine 64–cysteine 81. At phenylalanine 94 the chain carries Phenylalanine amide.

It localises to the secreted. Found in royal jelly and in hemolymph, potent antibacterial protein against Gram-positive bacteria at low concentration. This Apis mellifera carnica (Carniolan honeybee) protein is Defensin-1.